Reading from the N-terminus, the 201-residue chain is Holliday junction branch migration complex subunit RuvA (201 aa).

Residues 1–64 form a domain I region; the sequence is MIGFIRGLLV…EDAHSLFGFG (64 aa). The segment at 65–143 is domain II; that stretch reads TEAERGLFRS…IGVPSLAPAS (79 aa). Residues 144–153 form a flexible linker region; sequence FAGGAAPLPA. The interval 153-201 is domain III; it reads AADPADEAVSALIALGFKPQEANTLVARQAAEGRSAEDLIRAALQSAVR.

The protein belongs to the RuvA family. As to quaternary structure, homotetramer. Forms an RuvA(8)-RuvB(12)-Holliday junction (HJ) complex. HJ DNA is sandwiched between 2 RuvA tetramers; dsDNA enters through RuvA and exits via RuvB. An RuvB hexamer assembles on each DNA strand where it exits the tetramer. Each RuvB hexamer is contacted by two RuvA subunits (via domain III) on 2 adjacent RuvB subunits; this complex drives branch migration. In the full resolvosome a probable DNA-RuvA(4)-RuvB(12)-RuvC(2) complex forms which resolves the HJ.

It localises to the cytoplasm. Functionally, the RuvA-RuvB-RuvC complex processes Holliday junction (HJ) DNA during genetic recombination and DNA repair, while the RuvA-RuvB complex plays an important role in the rescue of blocked DNA replication forks via replication fork reversal (RFR). RuvA specifically binds to HJ cruciform DNA, conferring on it an open structure. The RuvB hexamer acts as an ATP-dependent pump, pulling dsDNA into and through the RuvAB complex. HJ branch migration allows RuvC to scan DNA until it finds its consensus sequence, where it cleaves and resolves the cruciform DNA. This chain is Holliday junction branch migration complex subunit RuvA, found in Methylococcus capsulatus (strain ATCC 33009 / NCIMB 11132 / Bath).